The chain runs to 572 residues: M-phase inducer phosphatase 3 (572 aa).

Disordered stretches follow at residues 95–117 (NLGD…GKLE) and 304–354 (SPSM…QRRG). In terms of domain architecture, Rhodanese spans 420-527 (LVEKFFIIDC…FFPEYKELCE (108 aa)). C476 is an active-site residue.

The protein belongs to the MPI phosphatase family.

The catalysed reaction is O-phospho-L-tyrosyl-[protein] + H2O = L-tyrosyl-[protein] + phosphate. Functionally, this protein functions as a dosage-dependent inducer in mitotic control. It is a tyrosine protein phosphatase required for progression of the cell cycle. It may directly dephosphorylate p34(cdc2) and activate the p34(cdc2) kinase activity. The polypeptide is M-phase inducer phosphatase 3 (cdc25-3) (Xenopus laevis (African clawed frog)).